Consider the following 410-residue polypeptide: Putative odorant receptor 65c (410 aa).

Over 1 to 59 (MDIRGNVHRFVKFYIDGWKHFRDPTMESSYSAVYYWREQMKAMFLYTTSKERQMPYRSS) the chain is Cytoplasmic. A helical membrane pass occupies residues 60–80 (WHTLVIIQATVCFLTMCYGVT). At 81–92 (ESLGDKVQMGRD) the chain is on the extracellular side. A helical transmembrane segment spans residues 93 to 113 (IAFIIGFFYIAFKIYYFQWYG). At 114–148 (DELDEVVEALETFHPWAQKGPGAVDYRTAKRWYFT) the chain is on the cytoplasmic side. A helical transmembrane segment spans residues 149-169 (LAFFLASSWLVFLCIFILLLI). At 170 to 222 (TSPLWVHQQILPLHAAFPFQWHEKSIHPISHAFIYLFQTWNVMYFLTWLVCIE) the chain is on the extracellular side. A helical transmembrane segment spans residues 223 to 243 (GLSVSIYVEITFAIEVLCLEL). At 244–279 (RHLHQRCHGYEQLRLETNRLVQFHQKIVHILDHTNK) the chain is on the cytoplasmic side. The chain crosses the membrane as a helical span at residues 280–300 (VFHGTLIMQMGVNFFLVSLSV). Topologically, residues 301 to 312 (LEAMEARKDPKV) are extracellular. A helical membrane pass occupies residues 313–333 (VAQFAVLMLLALGHLSMWSYF). The Cytoplasmic portion of the chain corresponds to 334–385 (GDLLSQKSLTISEAAYEAYDPIKGSKDVYRDLCLIIRRGQEPLIMRASPFPS). Residues 386–406 (FNFINYSAILNQCYGILTFLL) form a helical membrane-spanning segment. The Extracellular segment spans residues 407–410 (KTLD).

Belongs to the insect chemoreceptor superfamily. Heteromeric odorant receptor channel (TC 1.A.69) family. Or49a subfamily. In terms of assembly, interacts with Orco. Complexes exist early in the endomembrane system in olfactory sensory neurons (OSNs), coupling these complexes to the conserved ciliary trafficking pathway.

The protein resides in the cell membrane. Odorant receptor which mediates acceptance or avoidance behavior, depending on its substrates. The odorant receptor repertoire encodes a large collection of odor stimuli that vary widely in identity, intensity, and duration. May form a complex with Orco to form odorant-sensing units, providing sensitive and prolonged odorant signaling and calcium permeability. This is Putative odorant receptor 65c (Or65c) from Drosophila melanogaster (Fruit fly).